Here is a 613-residue protein sequence, read N- to C-terminus: MCGWPLLVLWALLPATAAGSPGRSYPHRVVLDPEGKYWLHWGRQGERLAFRLEVRTNGYVGFGFSPTGSMAAADIVVGGVAHGRPYLQDYFTNADRELEKDAQQDYHLDYAMENSTHTVIEFSRELHTCDVNDKSLTDSTVRVIWAYHHDDPGESGPKYHDLNRGTRSLRLLNPEKANVVSTVLPYFDLVNQNVPIPNKGTTYWCQMFKIPTFQEKHHVIKVEPIIERGHENLVHHILVYQCSSNFNDSVLDFGHECYHPNMPDAFLTCETVILAWGIGGEGFTYPPHVGLSLGMPLDPRYVLLEVHYDNPARRKGLIDSSGLRVFHTTDIRRYDAGVIEAGLWVSLFHTIPPGMPEFHSEGHCTLECLEEALGAEKPSGIHVFAVLLHAHLAGKGIRLRHFRKGEEMKLLAYDDDYDFNFQEFQYLREEQTILPGDNLITECRYNTKDRAVMTWGGLSTRNEMCLSYLLYYPRVNLTRCSSIPDIMEQLQFIGVKEIYRPVTTWPFIIKSPKQYRNLSFMDAMNKFKWTKKEGLSFNKLVLSLPVNVRCSKTDNAEWSIQGMTAIPPDIKRPYEAEPLVCEKAASPPLHGIFSLRLLTCALLLGSMLSSQGL.

A signal peptide spans 1 to 19 (MCGWPLLVLWALLPATAAG). Residues 20 to 587 (SPGRSYPHRV…PLVCEKAASP (568 aa)) lie on the Lumenal side of the membrane. Positions 35-148 (GKYWLHWGRQ…STVRVIWAYH (114 aa)) constitute a DOMON domain. Residue Asn-114 is glycosylated (N-linked (GlcNAc...) asparagine). The active site involves Tyr-203. Cystine bridges form between Cys-205–Cys-257 and Cys-242–Cys-269. Residues His-235 and His-236 each contribute to the Cu cation site. N-linked (GlcNAc...) asparagine glycosylation is present at Asn-247. The Cu cation site is built by His-307, His-389, His-391, and Met-464. Cystine bridges form between Cys-364–Cys-480, Cys-368–Cys-550, and Cys-443–Cys-465. His-389 is a catalytic residue. 2 N-linked (GlcNAc...) asparagine glycosylation sites follow: Asn-476 and Asn-517. Residues 588–608 (PLHGIFSLRLLTCALLLGSML) form a helical membrane-spanning segment.

Belongs to the copper type II ascorbate-dependent monooxygenase family. The cofactor is Cu(2+). Post-translationally, N-glycosylated. Broadly exprressed, with highest levels in salivary gland and ovary.

Its subcellular location is the endoplasmic reticulum membrane. The polypeptide is DBH-like monooxygenase protein 1 (Moxd1) (Mus musculus (Mouse)).